A 207-amino-acid chain; its full sequence is Large ribosomal subunit protein uL4 (207 aa).

Residues 45–89 (RQGTHKVKTRSEVRGGGRKPWRQKGTGRARQGSIRSPQWRGGGTV) form a disordered region. Positions 60 to 71 (GGRKPWRQKGTG) are enriched in basic residues.

The protein belongs to the universal ribosomal protein uL4 family. In terms of assembly, part of the 50S ribosomal subunit.

Functionally, one of the primary rRNA binding proteins, this protein initially binds near the 5'-end of the 23S rRNA. It is important during the early stages of 50S assembly. It makes multiple contacts with different domains of the 23S rRNA in the assembled 50S subunit and ribosome. In terms of biological role, forms part of the polypeptide exit tunnel. This chain is Large ribosomal subunit protein uL4, found in Bacillus anthracis (strain A0248).